The chain runs to 270 residues: Hematopoietically-expressed homeobox protein HHEX (270 aa).

Residues 1-137 (MQYPHPGPAA…PFLQRPLHKR (137 aa)) are interaction with SOX13. At serine 53 the chain carries Phosphoserine. The homeobox DNA-binding region spans 137 to 196 (RKGGQVRFSNDQTIELEKKFETQKYLSPPERKRLAKMLQLSERQVKTWFQNRRAKWRRLK). A required for WNT signaling induction region spans residues 137 to 270 (RKGGQVRFSN…EGDKSYFNAG (134 aa)). A disordered region spans residues 194 to 270 (RLKQENPQSN…EGDKSYFNAG (77 aa)). Over residues 222 to 241 (PSEQNKGASLDSSQCSPSPA) the composition is skewed to polar residues. The segment covering 244–260 (EDLESEISEDSDQEVDI) has biased composition (acidic residues).

As to quaternary structure, interacts with CD81; the interaction prevents nuclear translocation of HHEX. Interacts (via N-terminus) with SOX13; abolishes the SOX13-mediated inhibition of WNT-mediated transcriptional activity via competitive inhibition of the SOX13-TCF7 complex. Interacts with EIF4E; the interaction inhibits EIF4E-mediated mRNA nuclear export. Liver and promyelocytic leukemia cell line HL-60.

The protein localises to the nucleus. It is found in the nuclear body. It localises to the cytoplasm. Recognizes the DNA sequence 5'-ATTAA-3'. Transcriptional repressor. Activator of WNT-mediated transcription in conjunction with CTNNB1. Establishes anterior identity at two levels; acts early to enhance canonical WNT-signaling by repressing expression of TLE4, and acts later to inhibit NODAL-signaling by directly targeting NODAL. Inhibits EIF4E-mediated mRNA nuclear export. May play a role in hematopoietic differentiation. The sequence is that of Hematopoietically-expressed homeobox protein HHEX (HHEX) from Homo sapiens (Human).